The following is a 274-amino-acid chain: NH(3)-dependent NAD(+) synthetase (274 aa).

46 to 53 (GISGGQDS) is a binding site for ATP. Position 52 (Asp-52) interacts with Mg(2+). Arg-140 contacts deamido-NAD(+). Thr-160 is an ATP binding site. Glu-165 lines the Mg(2+) pocket. The deamido-NAD(+) site is built by Lys-173 and Asp-180. ATP contacts are provided by Lys-189 and Thr-211. 260 to 261 (HK) contacts deamido-NAD(+).

The protein belongs to the NAD synthetase family. In terms of assembly, homodimer.

It carries out the reaction deamido-NAD(+) + NH4(+) + ATP = AMP + diphosphate + NAD(+) + H(+). Its pathway is cofactor biosynthesis; NAD(+) biosynthesis; NAD(+) from deamido-NAD(+) (ammonia route): step 1/1. In terms of biological role, catalyzes the ATP-dependent amidation of deamido-NAD to form NAD. Uses ammonia as a nitrogen source. This chain is NH(3)-dependent NAD(+) synthetase, found in Streptococcus sanguinis (strain SK36).